A 106-amino-acid chain; its full sequence is Large ribosomal subunit protein bL21 (106 aa).

It belongs to the bacterial ribosomal protein bL21 family. As to quaternary structure, part of the 50S ribosomal subunit. Contacts protein L20.

This protein binds to 23S rRNA in the presence of protein L20. In Streptomyces coelicolor (strain ATCC BAA-471 / A3(2) / M145), this protein is Large ribosomal subunit protein bL21.